Consider the following 365-residue polypeptide: Neuronal migration protein doublecortin (365 aa).

Residue S28 is modified to Phosphoserine; by CDK5. S47 is modified (phosphoserine; by MARK1 and PKA). 2 consecutive Doublecortin domains span residues 53-139 (KKVR…VEYT) and 180-263 (KLVT…AQDD). Y70 carries the phosphotyrosine; by ABL modification. Residue S74 is modified to Phosphoserine; by PKC. Position 90 is a phosphoserine; by CK2 (S90). Residue S110 is modified to Phosphoserine; by PKC. S115 is modified (phosphoserine; by CK2, MARK1 and PKA). A Phosphoserine; by CK2 modification is found at S265. The tract at residues 275-365 (KGNPSATAGP…DDSDSLGDSM (91 aa)) is disordered. Phosphoserine; by CDK5 is present on S287. At T289 the chain carries Phosphothreonine; by CDK5. S294 is modified (phosphoserine; by PKC). Phosphoserine; by CDK5 is present on S297. S306 is subject to Phosphoserine; by CK2. S306 carries the phosphoserine; by DYRK2 modification. Over residues 307 to 341 (PADSGNDQDANGTSSSQLSTPKSKQSPISTPTSPG) the composition is skewed to polar residues. T326 carries the post-translational modification Phosphothreonine; by CDK5. A Phosphothreonine; by PKC and MAPK modification is found at T326. At S332 the chain carries Phosphoserine; by CDK5. S332 carries the phosphoserine; by MAPK modification. T336 bears the Phosphothreonine; by MAPK mark. S339 carries the phosphoserine; by CDK5 modification. S339 is subject to Phosphoserine; by MAPK. S342 bears the Phosphoserine; by PKC mark. Phosphoserine; by CK2 is present on residues S354 and S360. Over residues 356–365 (DDSDSLGDSM) the composition is skewed to acidic residues.

As to quaternary structure, interacts with tubulin. Interacts with USP9X. In terms of processing, phosphorylation by MARK1, MARK2 and PKA regulates its ability to bind microtubules. Phosphorylation at Ser-265 and Ser-297 seems to occur only in neonatal brain, the levels falling precipitously by postnatal day 21. Ubiquitinated by MDM2, leading to its degradation by the proteasome. Ubiquitinated by MDM2 and subsequent degradation leads to reduce the dendritic spine density of olfactory bulb granule cells.

It is found in the cytoplasm. Its subcellular location is the cell projection. It localises to the neuron projection. In terms of biological role, microtubule-associated protein required for initial steps of neuronal dispersion and cortex lamination during cerebral cortex development. May act by competing with the putative neuronal protein kinase DCLK1 in binding to a target protein. May in that way participate in a signaling pathway that is crucial for neuronal interaction before and during migration, possibly as part of a calcium ion-dependent signal transduction pathway. May participate along with PAFAH1B1/LIS-1 in a distinct overlapping signaling pathway that promotes neuronal migration. The polypeptide is Neuronal migration protein doublecortin (Dcx) (Rattus norvegicus (Rat)).